Reading from the N-terminus, the 515-residue chain is ATP synthase subunit alpha (515 aa).

171-178 (GDRQTGKT) serves as a coordination point for ATP.

Belongs to the ATPase alpha/beta chains family. As to quaternary structure, F-type ATPases have 2 components, CF(1) - the catalytic core - and CF(0) - the membrane proton channel. CF(1) has five subunits: alpha(3), beta(3), gamma(1), delta(1), epsilon(1). CF(0) has three main subunits: a(1), b(2) and c(9-12). The alpha and beta chains form an alternating ring which encloses part of the gamma chain. CF(1) is attached to CF(0) by a central stalk formed by the gamma and epsilon chains, while a peripheral stalk is formed by the delta and b chains.

The protein resides in the cell inner membrane. The enzyme catalyses ATP + H2O + 4 H(+)(in) = ADP + phosphate + 5 H(+)(out). In terms of biological role, produces ATP from ADP in the presence of a proton gradient across the membrane. The alpha chain is a regulatory subunit. This is ATP synthase subunit alpha from Xanthomonas oryzae pv. oryzae (strain MAFF 311018).